Consider the following 280-residue polypeptide: Phospholipase C D (280 aa).

The interval 258–280 (VPDPQIMPTQETTPTRGIPSGPC) is disordered.

Belongs to the bacterial phospholipase C family.

Its subcellular location is the secreted. The protein resides in the cell wall. It catalyses the reaction a 1,2-diacyl-sn-glycero-3-phosphocholine + H2O = phosphocholine + a 1,2-diacyl-sn-glycerol + H(+). The enzyme catalyses 1,2-dihexadecanoyl-sn-glycero-3-phosphocholine + H2O = 1,2-dihexadecanoyl-sn-glycerol + phosphocholine + H(+). Involved in virulence. Induces cytotoxic effects on mouse macrophage cell lines, via direct or indirect enzymatic hydrolysis of cell membrane phospholipids. Hydrolyzes phosphatidylcholine. Does not have hemolytic activity. The sequence is that of Phospholipase C D from Mycobacterium tuberculosis (strain ATCC 25618 / H37Rv).